The following is a 488-amino-acid chain: MSIEQDILNLLAVKNIISSDELNCKSTDIHGVLLSLSSKKVVDYTIIPIVERVLTPQGRQVEKEGSQEYNLITMLMKSNLSIDNIDKTTLKYAFKNKWIKMENNQIVLSGTTIQDITQKLLRNLDSISKDEFEELKKRKLVDINKKNIYKITRGENFNIEQKDIINELTTQNLFNISDTSLLKKYNFNLSKVSRFFGSLHPLTKIKSEFKRIFLEMGFSEMNTGKYVESSFWNFDSLFQPQNHPSREIQDTFFLKVPRLNDLNDVDSQYINRVESIHSSTSIPVDEGYDKCYSKGHNNVWSVAEAKKNILRTHTTAISSQMLYKLAQSNLKAEIKNYNIKLFSIDKVFRNETVDATHLAEFHQVEGLISGENLGIKELIHTIKTFFTKLNIHQIRFKPAFNPYTEPSMEIFGYHPQLKKWIELGNSGIFRPEMLLPMGFPKNVVVIAWGLSLERPAMIKLGLKNIRDLVGHKISVEFIRDSPVIFMNK.

The interval 1-146 is contains the major tRNA-Phe binding sites; that stretch reads MSIEQDILNL…KRKLVDINKK (146 aa). Residues T315, 363-365, and Y403 contribute to the L-phenylalanine site; that span reads QVE. Position 405 (E405) interacts with Mg(2+). L-phenylalanine is bound at residue F429.

This sequence belongs to the class-II aminoacyl-tRNA synthetase family. Phe-tRNA synthetase alpha subunit type 2 subfamily. In terms of assembly, tetramer of two alpha and two beta subunits. Mg(2+) serves as cofactor.

The protein localises to the cytoplasm. The catalysed reaction is tRNA(Phe) + L-phenylalanine + ATP = L-phenylalanyl-tRNA(Phe) + AMP + diphosphate + H(+). The sequence is that of Probable phenylalanine--tRNA ligase alpha subunit from Enterocytozoon bieneusi (strain H348) (Microsporidian parasite).